The following is a 346-amino-acid chain: D-alanine--D-alanine ligase (346 aa).

The ATP-grasp domain maps to 125–325 (KRIWRSEGLP…YPALCLEVLR (201 aa)). 151–206 (FAALGSPMIVKPDREGSTIGLTKVTQIEQCGAAYALAARHDAMVLCEQFVKGDEVT) contacts ATP. Positions 278, 292, and 294 each coordinate Mg(2+).

It belongs to the D-alanine--D-alanine ligase family. Mg(2+) serves as cofactor. Requires Mn(2+) as cofactor.

It localises to the cytoplasm. It catalyses the reaction 2 D-alanine + ATP = D-alanyl-D-alanine + ADP + phosphate + H(+). Its pathway is cell wall biogenesis; peptidoglycan biosynthesis. Its function is as follows. Cell wall formation. The protein is D-alanine--D-alanine ligase of Albidiferax ferrireducens (strain ATCC BAA-621 / DSM 15236 / T118) (Rhodoferax ferrireducens).